The chain runs to 527 residues: Phospholipase A1-Igamma3, chloroplastic (527 aa).

The N-terminal 52 residues, 1–52 (MASLSLPITLKNPRFFSSSPQNIFKTQPQTLVLTTKFKTCSIICSSSCTSIS), are a transit peptide targeting the chloroplast. Over residues 55–65 (TTQQKQSNKQT) the composition is skewed to low complexity. The tract at residues 55 to 82 (TTQQKQSNKQTHVSDNKREEKAEEEEEE) is disordered. The segment covering 66–75 (HVSDNKREEK) has biased composition (basic and acidic residues). Positions 300-304 (GHSLG) match the GXSXG motif. The active-site Acyl-ester intermediate is the S302. Active-site charge relay system residues include D366 and H423.

This sequence belongs to the AB hydrolase superfamily. Lipase family. Highly expressed in flowers. Lower levels in seedlings, leaves and stems.

Its subcellular location is the plastid. It localises to the chloroplast. It catalyses the reaction 1,2-dihexadecanoyl-sn-glycero-3-phosphocholine + H2O = 2-hexadecanoyl-sn-glycero-3-phosphocholine + hexadecanoate + H(+). It carries out the reaction a 1,2-diacyl-3-O-(beta-D-galactosyl)-sn-glycerol + H2O = an acyl-3-O-(beta-D-galactosyl)-sn-glycerol + a fatty acid + H(+). The enzyme catalyses a 1,2-diacyl-3-O-[alpha-D-galactosyl-(1-&gt;6)-beta-D-galactosyl]-sn-glycerol + H2O = acyl-3-O-[alpha-D-galactosyl-(1-&gt;6)-beta-D-galactosyl]-sn-glycerol + a fatty acid + H(+). Functionally, acylhydrolase that catalyzes the hydrolysis of phosphatidylcholine at the sn-1 position. Moderate activity toward phosphatidylcholine (PC), monogalactosyldiacylglycerol (MGDG), digalactosyldiacylglycerol (DGDG) and triacylglycerol (TAG). This chain is Phospholipase A1-Igamma3, chloroplastic, found in Arabidopsis thaliana (Mouse-ear cress).